The sequence spans 318 residues: Methionyl-tRNA formyltransferase (318 aa).

112-115 is a binding site for (6S)-5,6,7,8-tetrahydrofolate; that stretch reads SILP.

Belongs to the Fmt family.

It catalyses the reaction L-methionyl-tRNA(fMet) + (6R)-10-formyltetrahydrofolate = N-formyl-L-methionyl-tRNA(fMet) + (6S)-5,6,7,8-tetrahydrofolate + H(+). Functionally, attaches a formyl group to the free amino group of methionyl-tRNA(fMet). The formyl group appears to play a dual role in the initiator identity of N-formylmethionyl-tRNA by promoting its recognition by IF2 and preventing the misappropriation of this tRNA by the elongation apparatus. The protein is Methionyl-tRNA formyltransferase of Shewanella sp. (strain W3-18-1).